The chain runs to 134 residues: Translation initiation factor 2 subunit beta (134 aa).

It belongs to the eIF-2-beta/eIF-5 family. As to quaternary structure, heterotrimer composed of an alpha, a beta and a gamma chain.

Functionally, eIF-2 functions in the early steps of protein synthesis by forming a ternary complex with GTP and initiator tRNA. The protein is Translation initiation factor 2 subunit beta of Pyrobaculum calidifontis (strain DSM 21063 / JCM 11548 / VA1).